The following is a 1079-amino-acid chain: Tudor domain-containing protein 7A (1079 aa).

The HTH OST-type 1 domain occupies 3–76 (DVELVKKMLR…TGEVMCFAGV (74 aa)). The tract at residues 153–175 (LPSSRAPAWQMNRKSPVPEKTSV) is disordered. HTH OST-type domains lie at 205-270 (DVEL…RLVY) and 366-434 (LTTE…ILYT). 2 consecutive Tudor domains span residues 519-576 (SPKI…FMTL) and 708-765 (RPFC…FLKE).

It belongs to the TDRD7 family.

It localises to the cytoplasm. Functionally, component of specific cytoplasmic RNA granules involved in post-transcriptional regulation of specific genes: probably acts by binding to specific mRNAs and regulating their translation. Probably required during spermatogenesis. Required for structural integrity of granules in primordial germ cells (PGCs). In Danio rerio (Zebrafish), this protein is Tudor domain-containing protein 7A (tdrd7a).